The primary structure comprises 123 residues: Guanine nucleotide exchange factor MSS4 (123 aa).

Residue methionine 1 is modified to N-acetylmethionine. The region spanning 9–123 (ELVSAEGRNR…YVALERVSHE (115 aa)) is the MSS4 domain. Residues cysteine 23, cysteine 26, cysteine 94, and cysteine 97 each coordinate Zn(2+).

Belongs to the DSS4/MSS4 family. As to quaternary structure, interacts with RAB8A.

Its function is as follows. Guanine-nucleotide-releasing protein that acts on members of the SEC4/YPT1/RAB subfamily. Stimulates GDP release from both YPT1, RAB3A and RAB10, but is less active on these proteins than on the SEC4 protein. Might play a general role in vesicular transport. The polypeptide is Guanine nucleotide exchange factor MSS4 (Mus musculus (Mouse)).